The sequence spans 178 residues: Large ribosomal subunit protein uL6 (178 aa).

Belongs to the universal ribosomal protein uL6 family. In terms of assembly, part of the 50S ribosomal subunit.

This protein binds to the 23S rRNA, and is important in its secondary structure. It is located near the subunit interface in the base of the L7/L12 stalk, and near the tRNA binding site of the peptidyltransferase center. In Helicobacter pylori (strain Shi470), this protein is Large ribosomal subunit protein uL6.